The primary structure comprises 230 residues: Claudin-2 (230 aa).

The Cytoplasmic segment spans residues 1-7; sequence MASLGVQ. Residues 8 to 28 form a helical membrane-spanning segment; it reads LVGYILGLLGLLGTSIAMLLP. The Extracellular segment spans residues 29-81; it reads NWRTSSYVGASIVTAVGFSKGLWMECATHSTGITQCDIYSTLLGLPADIQAAQ. A disulfide bridge links cysteine 54 with cysteine 64. Residues 82–102 form a helical membrane-spanning segment; sequence AMMVTSSAMSSLACIISVVGM. Topologically, residues 103–116 are cytoplasmic; that stretch reads RCTVFCQDSRAKDR. A helical transmembrane segment spans residues 117-137; sequence VAVVGGVFFILGGILGFIPVA. The Extracellular segment spans residues 138–162; the sequence is WNLHGILRDFYSPLVPDSMKFEIGE. Residues 163–183 form a helical membrane-spanning segment; that stretch reads ALYLGIISALFSLVAGVILCF. Residues 184–230 are Cytoplasmic-facing; sequence SCSPQGNRTNYYDGYQAQPLATRSSPRSAQQPKAKSEFNSYSLTGYV. The interval 205 to 230 is disordered; it reads TRSSPRSAQQPKAKSEFNSYSLTGYV. Residue lysine 218 forms a Glycyl lysine isopeptide (Lys-Gly) (interchain with G-Cter in SUMO) linkage. Phosphoserine is present on residues serine 219 and serine 223. Positions 229 to 230 are interactions with TJP1, TJP2 and TJP3; the sequence is YV.

The protein belongs to the claudin family. As to quaternary structure, can form homo- and heteropolymers with other claudins to mediate paracellular barrier and channel functions of tight junctions in response to physiological stimuli. Homopolymers interact with CLDN3, but not CLDN1, homopolymers. Directly interacts with TJP1/ZO-1, TJP2/ZO-2 and TJP3/ZO-3. In terms of processing, the disulfide bond is necessary for pore formation, but is not required for correct protein trafficking. In terms of tissue distribution, expressed in the kidney, liver and intestine, with higher levels in the ileum than in the jejunum. Low levels in the brain. Expressed in colonic epithelium (at protein level). Expressed in the perivenous regions, bile ducts, and gallbladder epithelium (at protein level).

It is found in the cell junction. Its subcellular location is the tight junction. The protein localises to the cell membrane. The catalysed reaction is Na(+)(in) = Na(+)(out). It catalyses the reaction K(+)(in) = K(+)(out). It carries out the reaction Rb(+)(in) = Rb(+)(out). The enzyme catalyses Li(+)(in) = Li(+)(out). The catalysed reaction is Cs(+)(in) = Cs(+)(out). It catalyses the reaction Ca(2+)(in) = Ca(2+)(out). It carries out the reaction methylamine(out) = methylamine(in). The enzyme catalyses choline(out) = choline(in). The catalysed reaction is H2O(in) = H2O(out). Its activity is regulated as follows. The channel permeability is down-regulated at acidic pH. Its function is as follows. Forms paracellular channels: polymerizes in tight junction strands with cation- and water-selective channels through the strands, conveying epithelial permeability in a process known as paracellular tight junction permeability. In intestinal epithelium, allows for sodium and water fluxes from the peritoneal side to the lumen of the intestine to regulate nutrient absorption and clear enteric pathogens as part of mucosal immune response. In kidney, allows passive sodium and calcium reabsorption across proximal tubules from the lumen back to the bloodstream. In the hepatobiliary tract, allows paracellular water and cation fluxes in the hepatic perivenous areas and biliary epithelium to generate bile flow and maintain osmotic gradients. The chain is Claudin-2 from Mus musculus (Mouse).